Here is a 205-residue protein sequence, read N- to C-terminus: Protein Nef (205 aa).

The N-myristoyl glycine; by host moiety is linked to residue Gly2. The residue at position 6 (Ser6) is a Phosphoserine; by host. An acidic; interacts with host PACS1 and PACS2; stabilizes the interaction of NEF/MHC-I with host AP1M1; necessary for MHC-I internalization region spans residues 62 to 65 (EEEE). Residues 69–78 (PVTPQVPLRP) form an SH3-binding; interaction with Src family tyrosine kinases region. Positions 72 to 75 (PQVP) match the PxxP; stabilizes the interaction of NEF/MHC-I with host AP1M1; necessary for MHC-I internalization motif. Positions 108 to 124 (DILDLWIHHTQGYFPDW) are mediates dimerization, Nef-PTE1 interaction. A binding to ATP6V1H region spans residues 148 to 179 (VEPEKEEANKGENTSLLHPVSLHGMDDPEREV). Positions 163–164 (LL) match the Dileucine internalization motif; necessary for CD4 internalization motif. The Diacidic; necessary for CD4 internalization signature appears at 173-174 (DD).

The protein belongs to the lentivirus primate group Nef protein family. In terms of assembly, monomer; cytosolic form. Homodimer; membrane bound form. Interacts with Nef associated p21-activated kinase (PAK2); this interaction activates PAK2. Associates with the Nef-MHC-I-AP1 complex; this complex is required for MHC-I internalization. Interacts (via C-terminus) with host PI3-kinase. Interacts with host PACS1; this interaction seems to be weak. Interacts with host PACS2. Interacts with host LCK and MAPK3; these interactions inhibit the kinase activity of the latter. Interacts with host ATP6V1H; this interaction may play a role in CD4 endocytosis. Associates with the CD4-Nef-AP2 complex; this complex is required for CD4 internalization. Interacts with host AP2 subunit alpha and AP2 subunit sigma2. Interacts with TCR-zeta chain; this interaction up-regulates the Fas ligand (FasL) surface expression. Interacts with host HCK, LYN, and SRC; these interactions activate the Src family kinases. Interacts with MAP3K5; this interaction inhibits the Fas and TNFR-mediated death signals. Interacts with beta-COP and PTE1. Interacts with human RACK1; this increases Nef phosphorylation by PKC. Interacts with TP53; this interaction decreases the half-life of TP53, protecting the infected cell against p53-mediated apoptosis. Post-translationally, the virion-associated Nef proteins are cleaved by the viral protease to release the soluble C-terminal core protein. Nef is probably cleaved concomitantly with viral structural proteins on maturation of virus particles. Myristoylated. In terms of processing, phosphorylated on serine residues, probably by host PKCdelta and theta.

Its subcellular location is the host cell membrane. The protein resides in the virion. It localises to the secreted. It is found in the host Golgi apparatus membrane. Its function is as follows. Factor of infectivity and pathogenicity, required for optimal virus replication. Alters numerous pathways of T-lymphocyte function and down-regulates immunity surface molecules in order to evade host defense and increase viral infectivity. Alters the functionality of other immunity cells, like dendritic cells, monocytes/macrophages and NK cells. In terms of biological role, in infected CD4(+) T-lymphocytes, down-regulates the surface MHC-I, mature MHC-II, CD4, CD28, CCR5 and CXCR4 molecules. Mediates internalization and degradation of host CD4 through the interaction of with the cytoplasmic tail of CD4, the recruitment of AP-2 (clathrin adapter protein complex 2), internalization through clathrin coated pits, and subsequent transport to endosomes and lysosomes for degradation. Diverts host MHC-I molecules to the trans-Golgi network-associated endosomal compartments by an endocytic pathway to finally target them for degradation. MHC-I down-regulation may involve AP-1 (clathrin adapter protein complex 1) or possibly Src family kinase-ZAP70/Syk-PI3K cascade recruited by PACS2. In consequence infected cells are masked for immune recognition by cytotoxic T-lymphocytes. Decreasing the number of immune receptors also prevents reinfection by more HIV particles (superinfection). Down-regulates host SERINC3 and SERINC5 thereby excluding these proteins from the viral particles. Virion infectivity is drastically higher when SERINC3 or SERINC5 are excluded from the viral envelope, because these host antiviral proteins impair the membrane fusion event necessary for subsequent virion penetration. Bypasses host T-cell signaling by inducing a transcriptional program nearly identical to that of anti-CD3 cell activation. Interaction with TCR-zeta chain up-regulates the Fas ligand (FasL). Increasing surface FasL molecules and decreasing surface MHC-I molecules on infected CD4(+) cells send attacking cytotoxic CD8+ T-lymphocytes into apoptosis. Functionally, plays a role in optimizing the host cell environment for viral replication without causing cell death by apoptosis. Protects the infected cells from apoptosis in order to keep them alive until the next virus generation is ready to strike. Inhibits the Fas and TNFR-mediated death signals by blocking MAP3K5/ASK1. Decreases the half-life of TP53, protecting the infected cell against p53-mediated apoptosis. Inhibits the apoptotic signals regulated by the Bcl-2 family proteins through the formation of a Nef/PI3-kinase/PAK2 complex that leads to activation of PAK2 and induces phosphorylation of host BAD. Its function is as follows. Extracellular Nef protein targets CD4(+) T-lymphocytes for apoptosis by interacting with CXCR4 surface receptors. In Homo sapiens (Human), this protein is Protein Nef.